Here is a 342-residue protein sequence, read N- to C-terminus: Pyridoxal 4-dehydrogenase (342 aa).

Residue D56 is part of the active site. Y61 acts as the Proton donor in catalysis. K86 is a catalytic residue. Residue 245 to 255 (GVFNSGILAAP) coordinates NADP(+).

It belongs to the aldo/keto reductase family. As to quaternary structure, homodimer.

The enzyme catalyses pyridoxal + NAD(+) = 4-pyridoxolactone + NADH + H(+). The protein operates within cofactor degradation; B6 vitamer degradation; 4-pyridoxate from pyridoxal: step 1/2. The protein is Pyridoxal 4-dehydrogenase (pld1) of Microbacterium luteolum (Aureobacterium luteolum).